Here is a 102-residue protein sequence, read N- to C-terminus: Large ribosomal subunit protein bL21 (102 aa).

The protein belongs to the bacterial ribosomal protein bL21 family. In terms of assembly, part of the 50S ribosomal subunit. Contacts protein L20.

Functionally, this protein binds to 23S rRNA in the presence of protein L20. This Listeria monocytogenes serotype 4b (strain CLIP80459) protein is Large ribosomal subunit protein bL21.